Here is a 277-residue protein sequence, read N- to C-terminus: NADPH-dependent 7-cyano-7-deazaguanine reductase (277 aa).

86 to 88 (IES) provides a ligand contact to substrate. 88 to 89 (SK) is a binding site for NADPH. Cys-185 (thioimide intermediate) is an active-site residue. The active-site Proton donor is the Asp-192. A substrate-binding site is contributed by 224 to 225 (HE). An NADPH-binding site is contributed by 253 to 254 (RG).

The protein belongs to the GTP cyclohydrolase I family. QueF type 2 subfamily. In terms of assembly, homodimer.

The protein localises to the cytoplasm. The catalysed reaction is 7-aminomethyl-7-carbaguanine + 2 NADP(+) = 7-cyano-7-deazaguanine + 2 NADPH + 3 H(+). The protein operates within tRNA modification; tRNA-queuosine biosynthesis. Functionally, catalyzes the NADPH-dependent reduction of 7-cyano-7-deazaguanine (preQ0) to 7-aminomethyl-7-deazaguanine (preQ1). In Hydrogenovibrio crunogenus (strain DSM 25203 / XCL-2) (Thiomicrospira crunogena), this protein is NADPH-dependent 7-cyano-7-deazaguanine reductase.